The chain runs to 215 residues: MEIKGESMQKSKFRRICVFCGSSQGKKSSYQDAAVDLGNELVSRNIDLVYGGGSIGLMGLVSQAVHDGGRHVIGIIPKTLMPRELTGETVGEVRAVADMHQRKAEMAKHSDAFIALPGGYGTLEELLEVITWAQLGIHDKPVGLLNVDGYYNSLLSFIDKAVEEGFISPTAREIIVSAPTAKELVKKLEEYAPCHERVATKLCWEMERIGYSSEE.

Substrate contacts are provided by residues Glu84, 102-103 (RK), 119-125 (GYGTLEE), and Thr131.

This sequence belongs to the LOG family. As to expression, expressed in roots and shoots. Detected in root procambium, lateral root primordia, vascular tissues of immature leaves, axillary buds, style and ovular funiculus.

Its subcellular location is the cytoplasm. The protein resides in the nucleus. It catalyses the reaction N(6)-(dimethylallyl)adenosine 5'-phosphate + H2O = N(6)-dimethylallyladenine + D-ribose 5-phosphate. The enzyme catalyses 9-ribosyl-trans-zeatin 5'-phosphate + H2O = trans-zeatin + D-ribose 5-phosphate. Its function is as follows. Cytokinin-activating enzyme working in the direct activation pathway. Phosphoribohydrolase that converts inactive cytokinin nucleotides to the biologically active free-base forms. The chain is Cytokinin riboside 5'-monophosphate phosphoribohydrolase LOG3 (LOG3) from Arabidopsis thaliana (Mouse-ear cress).